The primary structure comprises 524 residues: Nucleobase-ascorbate transporter 2 (524 aa).

Helical transmembrane passes span 41 to 61 (YILALGTAVMIPSILVPMMGG), 69 to 89 (VVQTLLFLQGVNTLLQTLFGT), 91 to 111 (LPTVIGGSYAFMVPIISIIHD), 133 to 153 (GAIIVASSVQIILGFSQMWAI), 155 to 175 (SRFFSPIGMVPVIALTGFGLF), 179 to 199 (FPVVGNCVEIGLPMLILFVIF), 217 to 237 (FALIIALIIVWAYAHVLTASG), 282 to 302 (AFAMMAAVLVSLIESTGAFKA), 359 to 379 (RVIQISAGFMIFFSMLGKFGA), 380 to 400 (LFASIPFTIFAAVYCVLFGLV), 419 to 439 (LFIVGVSLFLGLSIPEYFRDF), and 457 to 477 (DFLNTIFLSSPMVALMVAVFL).

It belongs to the nucleobase:cation symporter-2 (NCS2) (TC 2.A.40) family. Expressed in cotyledons 10 days after imbibition (DAI). Expressed in the minor and major veins of cotyledons and leaves, in the shoot apex and pedicels. Expressed in the root meristems, root tips and lateral root primordia.

It localises to the membrane. This Arabidopsis thaliana (Mouse-ear cress) protein is Nucleobase-ascorbate transporter 2 (NAT2).